The chain runs to 484 residues: Protein arginine methyltransferase NDUFAF7 homolog, mitochondrial (484 aa).

The N-terminal 12 residues, 1 to 12 (MFRSITQRVIRN), are a transit peptide targeting the mitochondrion.

The protein belongs to the NDUFAF7 family. In terms of assembly, homodimer. Interacts with ndufs2.

The protein localises to the mitochondrion. It carries out the reaction L-arginyl-[protein] + 2 S-adenosyl-L-methionine = N(omega),N(omega)'-dimethyl-L-arginyl-[protein] + 2 S-adenosyl-L-homocysteine + 2 H(+). Involved in the assembly or stability of mitochondrial NADH:ubiquinone oxidoreductase complex (complex I). Acts as an arginine methyltransferase and probably acts by mediating arginine methylation of ndufs2. This is Protein arginine methyltransferase NDUFAF7 homolog, mitochondrial from Dictyostelium discoideum (Social amoeba).